The chain runs to 207 residues: Ribosomal RNA small subunit methyltransferase G (207 aa).

Residues Gly-74, Phe-79, 124 to 125, and Arg-138 contribute to the S-adenosyl-L-methionine site; that span reads VE.

Belongs to the methyltransferase superfamily. RNA methyltransferase RsmG family.

It is found in the cytoplasm. The catalysed reaction is guanosine(527) in 16S rRNA + S-adenosyl-L-methionine = N(7)-methylguanosine(527) in 16S rRNA + S-adenosyl-L-homocysteine. Specifically methylates the N7 position of guanine in position 527 of 16S rRNA. This Hyphomonas neptunium (strain ATCC 15444) protein is Ribosomal RNA small subunit methyltransferase G.